A 178-amino-acid chain; its full sequence is NADH-quinone oxidoreductase subunit B (178 aa).

[4Fe-4S] cluster is bound by residues cysteine 45, cysteine 46, cysteine 111, and cysteine 140.

It belongs to the complex I 20 kDa subunit family. NDH-1 is composed of 15 different subunits. Subunits NuoB, C, D, E, F, and G constitute the peripheral sector of the complex. [4Fe-4S] cluster is required as a cofactor.

It is found in the cell membrane. The enzyme catalyses a quinone + NADH + 5 H(+)(in) = a quinol + NAD(+) + 4 H(+)(out). Functionally, NDH-1 shuttles electrons from NADH, via FMN and iron-sulfur (Fe-S) centers, to quinones in the respiratory chain. The immediate electron acceptor for the enzyme in this species is believed to be a menaquinone. Couples the redox reaction to proton translocation (for every two electrons transferred, four hydrogen ions are translocated across the cytoplasmic membrane), and thus conserves the redox energy in a proton gradient. This is NADH-quinone oxidoreductase subunit B from Deinococcus deserti (strain DSM 17065 / CIP 109153 / LMG 22923 / VCD115).